A 360-amino-acid polypeptide reads, in one-letter code: E3 ubiquitin-protein ligase HAKAI homolog (360 aa).

Positions 1–11 (MLQIRLRRDSP) are enriched in basic and acidic residues. A disordered region spans residues 1–24 (MLQIRLRRDSPTETGNGARPSPTE). Residues 72–107 (CVRCDFPIAIYGRLIPCDHAFCLECARSDSICYLCD) form an RING-type zinc finger. The C2H2-type zinc finger occupies 123-148 (FICAAPHCLRSFLKKLDFEAHVHDLH). Positions 156–360 (AEKEDGNQSD…QENRDGFGQE (205 aa)) are disordered. Composition is skewed to polar residues over residues 163 to 179 (QSDV…SEST), 186 to 214 (SQLQ…QNYP), and 270 to 283 (YPTT…QFFN). Over residues 293–304 (ESGGSEQSSLLG) the composition is skewed to low complexity.

Belongs to the Hakai family. In terms of assembly, interacts with MTB and VIR. Associates with MTA, MTB, FIP37 and VIR to form the m6A writer complex which is essential for adenosine methylation at specific mRNA sequences.

It is found in the nucleus speckle. It localises to the nucleus. The protein localises to the nucleoplasm. The enzyme catalyses S-ubiquitinyl-[E2 ubiquitin-conjugating enzyme]-L-cysteine + [acceptor protein]-L-lysine = [E2 ubiquitin-conjugating enzyme]-L-cysteine + N(6)-ubiquitinyl-[acceptor protein]-L-lysine.. In terms of biological role, probable E3 ubiquitin-protein ligase which is a subunit of the N6-methyltransferase complex, a multiprotein complex that mediates N6-methyladenosine (m6A) methylation at the 5'-[AG]GAC-3' consensus sites of some mRNAs. Associates with MTA, MTB, FIP37 and VIR to form the m6A writer complex which is essential for adenosine methylation at specific mRNA sequences. N6-methyladenosine (m6A) plays a role in mRNA stability, processing, translation efficiency and editing. This chain is E3 ubiquitin-protein ligase HAKAI homolog, found in Arabidopsis thaliana (Mouse-ear cress).